Consider the following 929-residue polypeptide: Transcription initiation factor TFIID subunit 3 (929 aa).

Disordered regions lie at residues 131-152 (IVSS…TSAE) and 176-197 (LGKR…RPRL). Residues serine 183, serine 199, serine 229, and serine 243 each carry the phosphoserine modification. 2 disordered regions span residues 221–358 (TQKI…ETIQ) and 405–578 (DPFE…PWKE). Over residues 265-288 (TKSFTPKTKTKTSSPGQKTKSPKT) the composition is skewed to low complexity. N6-acetyllysine is present on lysine 266. A phosphoserine mark is found at serine 291, serine 297, and serine 301. 2 stretches are compositionally biased toward polar residues: residues 340–358 (PNRT…ETIQ) and 434–466 (PKAS…SWTM). Position 501 is a phosphothreonine (threonine 501). A compositionally biased stretch (basic and acidic residues) spans 504 to 514 (PLHKVYEEKTK). Positions 523–537 (KKLKKELKTKMKKKE) are enriched in basic residues. The segment covering 538 to 578 (KQRDREREKDKNKDKSKEKDKVKEKEKDKETGRETKYPWKE) has biased composition (basic and acidic residues). Lysine 581 is covalently cross-linked (Glycyl lysine isopeptide (Lys-Gly) (interchain with G-Cter in SUMO2)). Composition is skewed to basic and acidic residues over residues 603–612 (KLKDGLVRKE) and 621–648 (KDRE…DKMK). The tract at residues 603-658 (KLKDGLVRKEKEKHKDKKKDREKGKKDKDKREKEKVKDKGREDKMKAPAPPLVLPP) is disordered. Serine 667 carries the phosphoserine modification. A compositionally biased stretch (basic and acidic residues) spans 692–701 (EKEKVKEKEK). The interval 692–748 (EKEKVKEKEKKKDKKEKKKKKEKEKEKKEKEREKEKREREKREKEKEKHKHEKIKVE) is disordered. Positions 702–713 (KKDKKEKKKKKE) are enriched in basic residues. Basic and acidic residues predominate over residues 714–737 (KEKEKKEKEREKEKREREKREKEK). Residue lysine 746 forms a Glycyl lysine isopeptide (Lys-Gly) (interchain with G-Cter in SUMO2) linkage. Serine 755 carries the phosphoserine modification. Lysine 776 carries the post-translational modification N6-acetyllysine. Over residues 778–787 (VPAPEAKPAP) the composition is skewed to low complexity. Residues 778-807 (VPAPEAKPAPSQNRPKTPPPAPAPAPGPML) form a disordered region. Positions 793 to 804 (KTPPPAPAPAPG) are enriched in pro residues. Residues 865-915 (IWICPGCNKPDDGSPMIGCDDCDDWYHWPCVGIMTAPPEEMQWFCPKCANK) form a PHD-type zinc finger. The Zn(2+) site is built by cysteine 868, cysteine 871, cysteine 883, cysteine 886, histidine 891, cysteine 894, cysteine 909, and cysteine 912.

It belongs to the TAF3 family. In terms of assembly, component of the TFIID basal transcription factor complex, composed of TATA-box-binding protein TBP, and a number of TBP-associated factors (TAFs), including TAF1, TAF2, TAF3, TAF4, TAF5, TAF6, TAF7, TAF8, TAF9, TAF10, TAF11, TAF12 and TAF13. Interacts with TAF10 via the histone fold. Interacts with TAF13, TBP, SAP130 and GCN5L2. Interacts with TBPL2.

It localises to the nucleus. The TFIID basal transcription factor complex plays a major role in the initiation of RNA polymerase II (Pol II)-dependent transcription. TFIID recognizes and binds promoters with or without a TATA box via its subunit TBP, a TATA-box-binding protein, and promotes assembly of the pre-initiation complex (PIC). The TFIID complex consists of TBP and TBP-associated factors (TAFs), including TAF1, TAF2, TAF3, TAF4, TAF5, TAF6, TAF7, TAF8, TAF9, TAF10, TAF11, TAF12 and TAF13. The TFIID complex structure can be divided into 3 modules TFIID-A, TFIID-B, and TFIID-C. TAF3 forms the TFIID-A module together with TAF5 and TBP. Required in complex with TBPL2 for the differentiation of myoblasts into myocytes. The TAF3-TBPL2 complex replaces TFIID at specific promoters at an early stage in the differentiation process. In Homo sapiens (Human), this protein is Transcription initiation factor TFIID subunit 3 (TAF3).